Reading from the N-terminus, the 88-residue chain is Beta-defensin 115 (88 aa).

An N-terminal signal peptide occupies residues 1 to 27 (MLPDHFSPLSGDIKLSVLALVVLVVLA). Disulfide bonds link Cys-38-Cys-65, Cys-45-Cys-59, and Cys-49-Cys-66.

Belongs to the beta-defensin family.

It is found in the secreted. Its function is as follows. Has antibacterial activity. This chain is Beta-defensin 115 (DEFB115), found in Homo sapiens (Human).